The sequence spans 318 residues: Porphobilinogen deaminase (318 aa).

C245 bears the S-(dipyrrolylmethanemethyl)cysteine mark.

It belongs to the HMBS family. In terms of assembly, monomer. The cofactor is dipyrromethane.

It catalyses the reaction 4 porphobilinogen + H2O = hydroxymethylbilane + 4 NH4(+). It participates in porphyrin-containing compound metabolism; protoporphyrin-IX biosynthesis; coproporphyrinogen-III from 5-aminolevulinate: step 2/4. It functions in the pathway porphyrin-containing compound metabolism; chlorophyll biosynthesis. Functionally, tetrapolymerization of the monopyrrole PBG into the hydroxymethylbilane pre-uroporphyrinogen in several discrete steps. This chain is Porphobilinogen deaminase, found in Prochlorococcus marinus (strain MIT 9215).